The primary structure comprises 733 residues: Photosystem I P700 chlorophyll a apoprotein A2 (733 aa).

Helical transmembrane passes span 46–69 (IFASHFGHLAVIFLWTAGNLFHVA), 134–157 (LYLGSVGLLLLSCALLFAGWLHLQ), 174–198 (LNHHLSGLMGVSSLAWTGHLVHVAL), 272–290 (IAHHQLAIAFVFIIAGHMY), 329–352 (LHIQLGLALACLGVATSLTAQHMY), 368–394 (AALYTHHQYIAGFLMVGAFAHGAIFFV), 416–438 (AIISHLSWASLFLGFHVLGLYIH), and 516–534 (FLVHHAIALGLHVTTLILV). Residues C558 and C567 each coordinate [4Fe-4S] cluster. The next 2 membrane-spanning stretches (helical) occupy residues 574-595 (AFYLAMFWMLNTIGWVTFYWHW) and 642-664 (LSVWAWMFLFGHLIWATGFMFLI). Chlorophyll a is bound by residues H653, M661, and Y669. W670 provides a ligand contact to phylloquinone. The chain crosses the membrane as a helical span at residues 706–726 (LVGLVHFAVGYILTYAAFVIA).

This sequence belongs to the PsaA/PsaB family. In terms of assembly, the PsaA/B heterodimer binds the P700 chlorophyll special pair and subsequent electron acceptors. PSI consists of a core antenna complex that captures photons, and an electron transfer chain that converts photonic excitation into a charge separation. The eukaryotic PSI reaction center is composed of at least 11 subunits. The cofactor is P700 is a chlorophyll a/chlorophyll a' dimer, A0 is one or more chlorophyll a, A1 is one or both phylloquinones and FX is a shared 4Fe-4S iron-sulfur center..

Its subcellular location is the plastid. It localises to the chloroplast thylakoid membrane. The catalysed reaction is reduced [plastocyanin] + hnu + oxidized [2Fe-2S]-[ferredoxin] = oxidized [plastocyanin] + reduced [2Fe-2S]-[ferredoxin]. In terms of biological role, psaA and PsaB bind P700, the primary electron donor of photosystem I (PSI), as well as the electron acceptors A0, A1 and FX. PSI is a plastocyanin/cytochrome c6-ferredoxin oxidoreductase, converting photonic excitation into a charge separation, which transfers an electron from the donor P700 chlorophyll pair to the spectroscopically characterized acceptors A0, A1, FX, FA and FB in turn. Oxidized P700 is reduced on the lumenal side of the thylakoid membrane by plastocyanin or cytochrome c6. In Trieres chinensis (Marine centric diatom), this protein is Photosystem I P700 chlorophyll a apoprotein A2.